The primary structure comprises 536 residues: Testis-specific expressed protein 55 (536 aa).

Positions 1 to 11 are enriched in low complexity; it reads MEEPPQEALAE. Disordered regions lie at residues 1–287 and 328–348; these read MEEP…PGTS and SNAD…QTDH. The segment covering 35 to 52 has biased composition (basic and acidic residues); it reads QKNQAERKADNHTAHRIA. Composition is skewed to polar residues over residues 62 to 85 and 105 to 136; these read QAES…STPG and QVNQ…QVSG. 2 stretches are compositionally biased toward basic and acidic residues: residues 138 to 158 and 173 to 222; these read TEER…ERRT and RGSR…ERRP. Low complexity predominate over residues 226–242; sequence IDSGSSVPSDQSPSVQI. The segment covering 243–255 has biased composition (polar residues); it reads DSGSSVPSDQRPS. Residues 339 to 348 show a composition bias toward basic and acidic residues; that stretch reads HYTESDQTDH.

As to expression, testis-specific.

The protein resides in the nucleus. It localises to the cell projection. The protein localises to the cilium. Its subcellular location is the flagellum. The protein is Testis-specific expressed protein 55 of Homo sapiens (Human).